Consider the following 113-residue polypeptide: UPF0416 protein RF_0879 (113 aa).

The protein belongs to the UPF0416 family.

In Rickettsia felis (strain ATCC VR-1525 / URRWXCal2) (Rickettsia azadi), this protein is UPF0416 protein RF_0879.